Here is a 108-residue protein sequence, read N- to C-terminus: Small ribosomal subunit protein eS25B (108 aa).

Residues 1-20 (MPPKQQLSKAAKAAAALAGG) show a composition bias toward low complexity. The disordered stretch occupies residues 1–30 (MPPKQQLSKAAKAAAALAGGKKSKKKWSKK). Residue Pro2 is modified to N,N-dimethylproline; by NTM1. Basic residues predominate over residues 21-30 (KKSKKKWSKK).

This sequence belongs to the eukaryotic ribosomal protein eS25 family. As to quaternary structure, component of the small ribosomal subunit (SSU). Mature yeast ribosomes consist of a small (40S) and a large (60S) subunit. The 40S small subunit contains 1 molecule of ribosomal RNA (18S rRNA) and 33 different proteins (encoded by 57 genes). The large 60S subunit contains 3 rRNA molecules (25S, 5.8S and 5S rRNA) and 46 different proteins (encoded by 81 genes).

It is found in the cytoplasm. In terms of biological role, component of the ribosome, a large ribonucleoprotein complex responsible for the synthesis of proteins in the cell. The small ribosomal subunit (SSU) binds messenger RNAs (mRNAs) and translates the encoded message by selecting cognate aminoacyl-transfer RNA (tRNA) molecules. The large subunit (LSU) contains the ribosomal catalytic site termed the peptidyl transferase center (PTC), which catalyzes the formation of peptide bonds, thereby polymerizing the amino acids delivered by tRNAs into a polypeptide chain. The nascent polypeptides leave the ribosome through a tunnel in the LSU and interact with protein factors that function in enzymatic processing, targeting, and the membrane insertion of nascent chains at the exit of the ribosomal tunnel. This chain is Small ribosomal subunit protein eS25B, found in Saccharomyces cerevisiae (strain ATCC 204508 / S288c) (Baker's yeast).